The following is a 448-amino-acid chain: Methylenetetrahydrofolate--tRNA-(uracil-5-)-methyltransferase TrmFO (448 aa).

13-18 (GAGLAG) serves as a coordination point for FAD.

The protein belongs to the MnmG family. TrmFO subfamily. FAD serves as cofactor.

Its subcellular location is the cytoplasm. The enzyme catalyses uridine(54) in tRNA + (6R)-5,10-methylene-5,6,7,8-tetrahydrofolate + NADH + H(+) = 5-methyluridine(54) in tRNA + (6S)-5,6,7,8-tetrahydrofolate + NAD(+). It catalyses the reaction uridine(54) in tRNA + (6R)-5,10-methylene-5,6,7,8-tetrahydrofolate + NADPH + H(+) = 5-methyluridine(54) in tRNA + (6S)-5,6,7,8-tetrahydrofolate + NADP(+). Functionally, catalyzes the folate-dependent formation of 5-methyl-uridine at position 54 (M-5-U54) in all tRNAs. This is Methylenetetrahydrofolate--tRNA-(uracil-5-)-methyltransferase TrmFO from Streptococcus pyogenes serotype M3 (strain ATCC BAA-595 / MGAS315).